Consider the following 324-residue polypeptide: Cytosolic sulfotransferase 13 (324 aa).

76–81 (KSGTTW) provides a ligand contact to 3'-phosphoadenylyl sulfate. Residue H134 is the Proton acceptor of the active site. Residues R156, S164, Y222, and 288–290 (RKG) contribute to the 3'-phosphoadenylyl sulfate site.

Belongs to the sulfotransferase 1 family.

The protein localises to the cytoplasm. Its function is as follows. Sulfotransferase that utilizes 3'-phospho-5'-adenylyl sulfate (PAPS) as sulfonate donor. This is Cytosolic sulfotransferase 13 (SOT13) from Arabidopsis thaliana (Mouse-ear cress).